A 545-amino-acid chain; its full sequence is CTP synthase (545 aa).

The tract at residues 1-265 (MNGIKHIFIT…DKFVIKHLDL (265 aa)) is amidoligase domain. Residue S15 participates in CTP binding. S15 contacts UTP. Residues 16–21 (SIGKGL) and D73 contribute to the ATP site. Mg(2+) is bound by residues D73 and E141. CTP is bound by residues 148 to 150 (DIE), 188 to 193 (KTKPTQ), and K224. UTP-binding positions include 188-193 (KTKPTQ) and K224. In terms of domain architecture, Glutamine amidotransferase type-1 spans 290-534 (EIAIIGKYTG…VAAALARKEI (245 aa)). G349 is an L-glutamine binding site. C376 acts as the Nucleophile; for glutamine hydrolysis in catalysis. Residues 377–380 (LGMQ), E400, and R460 each bind L-glutamine. Residues H507 and E509 contribute to the active site.

The protein belongs to the CTP synthase family. In terms of assembly, homotetramer.

The enzyme catalyses UTP + L-glutamine + ATP + H2O = CTP + L-glutamate + ADP + phosphate + 2 H(+). It catalyses the reaction L-glutamine + H2O = L-glutamate + NH4(+). It carries out the reaction UTP + NH4(+) + ATP = CTP + ADP + phosphate + 2 H(+). It functions in the pathway pyrimidine metabolism; CTP biosynthesis via de novo pathway; CTP from UDP: step 2/2. Its activity is regulated as follows. Allosterically activated by GTP, when glutamine is the substrate; GTP has no effect on the reaction when ammonia is the substrate. The allosteric effector GTP functions by stabilizing the protein conformation that binds the tetrahedral intermediate(s) formed during glutamine hydrolysis. Inhibited by the product CTP, via allosteric rather than competitive inhibition. Catalyzes the ATP-dependent amination of UTP to CTP with either L-glutamine or ammonia as the source of nitrogen. Regulates intracellular CTP levels through interactions with the four ribonucleotide triphosphates. In Tropheryma whipplei (strain TW08/27) (Whipple's bacillus), this protein is CTP synthase.